A 909-amino-acid polypeptide reads, in one-letter code: MTDVVSDFDHVYNIIRNNYNLNYYLNCADRSNNVCTIKYLQERKSYFCCAVDESTGRCVLHRCVLIVFGTWLDKKFRKKEFSGGDATCGGGGGDGDQDQDAIDERSNIKGTFMIDGRFLSFPNVMMNNNILMHNFYDKLYSKNCKRMFLYGNVDEEKRINRAIQLVYDDHEDVLFARDVYAKDYVVSENLNETLETYLRSSGKWEPLNFLFDFDKNQTDKMFDRIKMIMRAEINYSIDSLSNKIIYKHAYLTHLLYRPVLKMYQASKIDSAAAVSESNGSLRKLGGNQSGAMYPKDCKKIVDTIVNGKLIHVISKTFSKQKKNFLNHQDNSSNNNIEMCPPMIKYRVGNEVVRIINDNMRQDMLKQEYDFVKFVDSFFHGEMTVAGKKFFLCRDVRLPNVDYESIAKKFKDLIESNLIVRRDEDENGSGGDDDDDEWLMIAFNNRPTTFSCKRKHLVRIVYEFKRKRFPVEIKLSKSILFVNHHEGMICIRKQVRINEKVNISALLTPYEYHNVESIIGQIGARIVDVDHVSALMSKTLQYYYRSHLHIFATIPVPKLIVSVTNLKNAMPVIEYDDVEWNENRDMFIRNLPVGNSVVASPGSVHNNKMINLWTLVRDSRLMTAEDPYIPNVTLPVKLFNNKVNRLKGKMVYASKSKTPLVKFFKSESNNFVDTNEGHVLAMAGVIVSNVKINWTHDGKRYKIETCKNKSFYIFKIYTFLRKIRSQRIELIDAKLSTLNDFVYVKFSIVTSTNNLDGIKICGIHGQKGVMNSSEDLTEWMAEDGTHAQICLSPVSFLSRQSNFDYIERKYVVRGGDHTDPSAVRYPMFRIPYMLFNNTPEILQRIPQTNYTGHEKIEGTRLDQWSINQSFAGNRWAEGLQCVRGGTNLPDSSGEYKVLTSLLHCNNVIVN.

The protein belongs to the RNA polymerase beta chain family.

It catalyses the reaction RNA(n) + a ribonucleoside 5'-triphosphate = RNA(n+1) + diphosphate. In terms of biological role, required for late and very late gene expression. May be a component of the novel RNA polymerase activity induced by baculovirus infection. The polypeptide is Probable DNA-directed RNA polymerase subunit beta (LEF-8) (Lepidoptera (butterflies and moths)).